The primary structure comprises 265 residues: Nitrogenase vanadium-iron protein alpha chain (265 aa).

Residues cysteine 17 and cysteine 80 each coordinate [8Fe-7S] cluster. Position 199 (cysteine 199) interacts with [7Fe-V-9S-C-homocitryl] cluster.

The protein belongs to the NifD/NifK/NifE/NifN family. As to quaternary structure, hexamer of two alpha, two beta, and two delta chains. [8Fe-7S] cluster serves as cofactor. The cofactor is [7Fe-V-9S-C-homocitryl] cluster.

It carries out the reaction N2 + 8 reduced [2Fe-2S]-[ferredoxin] + 16 ATP + 16 H2O = H2 + 8 oxidized [2Fe-2S]-[ferredoxin] + 2 NH4(+) + 16 ADP + 16 phosphate + 6 H(+). In terms of biological role, this vanadium-iron protein is part of the nitrogenase complex that catalyzes the key enzymatic reactions in nitrogen fixation. This Azorhizophilus paspali (Azotobacter paspali) protein is Nitrogenase vanadium-iron protein alpha chain (vnfD).